The primary structure comprises 233 residues: 3-dehydroquinate dehydratase (233 aa).

Residues E39–R41 and R73 each bind 3-dehydroquinate. Residue H132 is the Proton donor/acceptor of the active site. Catalysis depends on K159, which acts as the Schiff-base intermediate with substrate. Positions 196 and 219 each coordinate 3-dehydroquinate.

Belongs to the type-I 3-dehydroquinase family. In terms of assembly, homodimer.

The catalysed reaction is 3-dehydroquinate = 3-dehydroshikimate + H2O. Its pathway is metabolic intermediate biosynthesis; chorismate biosynthesis; chorismate from D-erythrose 4-phosphate and phosphoenolpyruvate: step 3/7. Involved in the third step of the chorismate pathway, which leads to the biosynthesis of aromatic amino acids. Catalyzes the cis-dehydration of 3-dehydroquinate (DHQ) and introduces the first double bond of the aromatic ring to yield 3-dehydroshikimate. This Methanococcoides burtonii (strain DSM 6242 / NBRC 107633 / OCM 468 / ACE-M) protein is 3-dehydroquinate dehydratase.